A 303-amino-acid polypeptide reads, in one-letter code: Zinc transporter ZIP9-A (303 aa).

The helical transmembrane segment at 7-27 threads the bilayer; it reads ISLLSLAMLVGCYVSGIIPLA. Residue asparagine 29 is glycosylated (N-linked (GlcNAc...) asparagine). A run of 5 helical transmembrane segments spans residues 35–55, 102–122, 142–162, 172–192, and 206–226; these read LKLVTVLGAGLLCGTALAVII, AYIGVSLVLGFVFMLLVDQIG, ITTTLGLVVHAAADGVALGAA, LIVFVAIMLHKAPAAFGLVSF, and HLLVFALAAPVLSMLTYLGLS. N-linked (GlcNAc...) asparagine glycosylation occurs at asparagine 237. Helical transmembrane passes span 240 to 260 and 282 to 302; these read GVAMLFSAGTFLYVATVHVLP and LEVCALVLGCLIPLVLSIGHQ.

The protein belongs to the ZIP transporter (TC 2.A.5) family.

The protein localises to the golgi apparatus. Its subcellular location is the trans-Golgi network membrane. The protein resides in the cell membrane. It is found in the cytoplasm. It localises to the perinuclear region. The protein localises to the mitochondrion. Its subcellular location is the nucleus. It catalyses the reaction Zn(2+)(in) = Zn(2+)(out). Functionally, transports zinc ions across cell and organelle membranes into the cytoplasm and regulates intracellular zinc homeostasis. Participates in the zinc ions efflux out of the secretory compartments. Regulates intracellular zinc level, resulting in the enhancement of AKT1 and MAPK3/MAPK1 (Erk1/2) phosphorylation in response to the BCR activation. Also functions as a membrane androgen receptor that mediates, through a G protein, the non-classical androgen signaling pathway, characterized by the activation of MAPK3/MAPK1 (Erk1/2) and transcription factors CREB1 or ATF1. Moreover, has dual functions as a membrane-bound androgen receptor and as an androgen-dependent zinc transporter both of which are mediated through an inhibitory G protein (Gi) that mediates both MAP kinase and zinc signaling leading to the androgen-dependent apoptotic process. This chain is Zinc transporter ZIP9-A (slc39a9-a), found in Xenopus laevis (African clawed frog).